The sequence spans 443 residues: MFLAQEIIRKKRNGLALSSEEIQFFVQGITTNSVSEGQIAALGMAVYFNDMNMDERIALTTAMRDSGTVLNWQSLGLNGPVIDKHSTGGVGDVISLMLGPMAAACGGYVPMISGRGLGHTGGTLDKFDAIPGYQTEPSSELFRKVVKDVGVAIIGQTGDLVPADKRFYSIRDNTATVESISLITASILSKKLACNLDALAMDVKVGSGAFMPTYEASEELARSIAAVANGAGTKTTALLTDMNQVLASCAGNAVEVKEAIDFLTGAYRNPRLYEVTMGLCAEMLLLGGLASNEADARAKLNRVLDNGRAAELFGKMVSGLGGPVDFVENYSKYLPQSQIIRPVFADMQGYAYSMDTRELGLAVVTLGGGRRKPGDALDYSVGLTQVCALGDKVDSSTPIAVIHAQSEAAFAEAELAVKKAIHIGETAPEKTPEIYAYIRASDL.

It belongs to the thymidine/pyrimidine-nucleoside phosphorylase family. Homodimer.

It carries out the reaction thymidine + phosphate = 2-deoxy-alpha-D-ribose 1-phosphate + thymine. It participates in pyrimidine metabolism; dTMP biosynthesis via salvage pathway; dTMP from thymine: step 1/2. In terms of biological role, the enzymes which catalyze the reversible phosphorolysis of pyrimidine nucleosides are involved in the degradation of these compounds and in their utilization as carbon and energy sources, or in the rescue of pyrimidine bases for nucleotide synthesis. This is Thymidine phosphorylase from Shewanella baltica (strain OS223).